Consider the following 118-residue polypeptide: Large ribosomal subunit protein uL22c (118 aa).

It belongs to the universal ribosomal protein uL22 family. In terms of assembly, part of the 50S ribosomal subunit.

Its subcellular location is the plastid. It is found in the chloroplast. Its function is as follows. This protein binds specifically to 23S rRNA. In terms of biological role, the globular domain of the protein is located near the polypeptide exit tunnel on the outside of the subunit, while an extended beta-hairpin is found that lines the wall of the exit tunnel in the center of the 70S ribosome. The protein is Large ribosomal subunit protein uL22c (rpl22) of Physcomitrium patens (Spreading-leaved earth moss).